The sequence spans 73 residues: Crustacean hyperglycemic hormone (73 aa).

Cystine bridges form between cysteine 7–cysteine 43, cysteine 23–cysteine 39, and cysteine 26–cysteine 52. Serine 73 is modified (serine amide).

As to expression, produced by the medulla terminalis X-organ in the eyestalks and transported to the sinus gland where they are stored and released. Found also in the brain; in the neuroendocrine structures of the protocerebrum.

The protein resides in the secreted. In terms of biological role, hormone found in the sinus gland of isopods and decapods which controls the blood sugar level. Has a secretagogue action over the amylase released from the midgut gland. May act as a stress hormone and may be involved in the control of molting and reproduction. The sequence is that of Crustacean hyperglycemic hormone from Armadillidium vulgare (Pillbug).